Consider the following 155-residue polypeptide: Protein SprT-like (155 aa).

One can recognise a SprT-like domain in the interval 7 to 145; the sequence is QRHMEEVSLQ…GSCGGKLIQI (139 aa). Residue His67 participates in Zn(2+) binding. Glu68 is an active-site residue. Residue His71 coordinates Zn(2+).

It belongs to the SprT family. Requires Zn(2+) as cofactor.

It is found in the cytoplasm. The polypeptide is Protein SprT-like (Listeria monocytogenes serotype 4a (strain HCC23)).